We begin with the raw amino-acid sequence, 315 residues long: Outer membrane protease IcsP (315 aa).

The signal sequence occupies residues Met1–Ala20. Catalysis depends on residues Asp103, Asp105, Asp230, and His232.

Belongs to the peptidase A26 family.

The protein localises to the cell outer membrane. In terms of biological role, protease responsible for the cleavage of IcsA between 'Arg-758' and 'Arg-759', removing the entire alpha domain from IscA localized on the bacterial surface. This proteolytic activity contributes to the maintenance of a tight polar cap of IcsA, which is important to Shigella actin-based motility. This Shigella flexneri protein is Outer membrane protease IcsP (icsP).